The sequence spans 133 residues: ATP synthase epsilon chain, chloroplastic (133 aa).

The protein belongs to the ATPase epsilon chain family. In terms of assembly, F-type ATPases have 2 components, CF(1) - the catalytic core - and CF(0) - the membrane proton channel. CF(1) has five subunits: alpha(3), beta(3), gamma(1), delta(1), epsilon(1). CF(0) has three main subunits: a, b and c.

It localises to the plastid. The protein resides in the chloroplast thylakoid membrane. Functionally, produces ATP from ADP in the presence of a proton gradient across the membrane. In Eucalyptus globulus subsp. globulus (Tasmanian blue gum), this protein is ATP synthase epsilon chain, chloroplastic.